A 96-amino-acid polypeptide reads, in one-letter code: Integration host factor subunit beta (96 aa).

Residues 59–78 (RVGRNPKTGETVSLPGKYVP) are disordered.

Belongs to the bacterial histone-like protein family. In terms of assembly, heterodimer of an alpha and a beta chain.

In terms of biological role, this protein is one of the two subunits of integration host factor, a specific DNA-binding protein that functions in genetic recombination as well as in transcriptional and translational control. This Thioalkalivibrio sulfidiphilus (strain HL-EbGR7) protein is Integration host factor subunit beta.